The chain runs to 205 residues: Mitochondrial ATP-independent inner membrane protease subunit 2 (205 aa).

Residues Glu-59 and Arg-104 contribute to the active site.

It belongs to the peptidase S26 family. IMP1 subfamily. As to quaternary structure, heterodimer of 2 subunits, IMP1A/B and IMP12.

It is found in the mitochondrion inner membrane. Its function is as follows. Catalyzes the removal of transit peptides required for the targeting of proteins from the mitochondrial matrix, across the inner membrane, into the inter-membrane space. The protein is Mitochondrial ATP-independent inner membrane protease subunit 2 of Arabidopsis thaliana (Mouse-ear cress).